The primary structure comprises 465 residues: tRNA modification GTPase MnmE (465 aa).

Residues Arg-23, Glu-81, and Lys-120 each coordinate (6S)-5-formyl-5,6,7,8-tetrahydrofolate. The TrmE-type G domain occupies 217–389 (GVHVVLAGRP…LIASLCDKVG (173 aa)). Asn-227 provides a ligand contact to K(+). Residues 227–232 (NAGKSS), 246–252 (TDVAGTT), and 271–274 (DTAG) contribute to the GTP site. Ser-231 is a Mg(2+) binding site. Thr-246, Val-248, and Thr-251 together coordinate K(+). Thr-252 provides a ligand contact to Mg(2+). Lys-465 is a (6S)-5-formyl-5,6,7,8-tetrahydrofolate binding site.

The protein belongs to the TRAFAC class TrmE-Era-EngA-EngB-Septin-like GTPase superfamily. TrmE GTPase family. Homodimer. Heterotetramer of two MnmE and two MnmG subunits. K(+) serves as cofactor.

The protein resides in the cytoplasm. Functionally, exhibits a very high intrinsic GTPase hydrolysis rate. Involved in the addition of a carboxymethylaminomethyl (cmnm) group at the wobble position (U34) of certain tRNAs, forming tRNA-cmnm(5)s(2)U34. This is tRNA modification GTPase MnmE from Psychrobacter sp. (strain PRwf-1).